The following is a 449-amino-acid chain: Chromosomal replication initiator protein DnaA (449 aa).

Residues 1 to 73 (MTQNPQWLWQ…TETIAELLQQ (73 aa)) are domain I, interacts with DnaA modulators. The domain II stretch occupies residues 73–109 (QPVKVRLTSPEGNTLAATQSFYSSRSGQSTRPGKKTP). The segment covering 90-103 (TQSFYSSRSGQSTR) has biased composition (polar residues). Positions 90–110 (TQSFYSSRSGQSTRPGKKTPE) are disordered. A domain III, AAA+ region region spans residues 110–326 (ELNSKYTFSR…GALLRAVTHI (217 aa)). Residues glycine 154, glycine 156, lysine 157, and threonine 158 each contribute to the ATP site. Residues 327–449 (AISGLPMTVE…DRINHHHQNL (123 aa)) are domain IV, binds dsDNA.

Belongs to the DnaA family. Oligomerizes as a right-handed, spiral filament on DNA at oriC.

It is found in the cytoplasm. In terms of biological role, plays an essential role in the initiation and regulation of chromosomal replication. ATP-DnaA binds to the origin of replication (oriC) to initiate formation of the DNA replication initiation complex once per cell cycle. Binds the DnaA box (a 9 base pair repeat at the origin) and separates the double-stranded (ds)DNA. Forms a right-handed helical filament on oriC DNA; dsDNA binds to the exterior of the filament while single-stranded (ss)DNA is stabiized in the filament's interior. The ATP-DnaA-oriC complex binds and stabilizes one strand of the AT-rich DNA unwinding element (DUE), permitting loading of DNA polymerase. After initiation quickly degrades to an ADP-DnaA complex that is not apt for DNA replication. Binds acidic phospholipids. This Picosynechococcus sp. (strain ATCC 27264 / PCC 7002 / PR-6) (Agmenellum quadruplicatum) protein is Chromosomal replication initiator protein DnaA.